Reading from the N-terminus, the 173-residue chain is Bilin biosynthesis protein PecF (173 aa).

Belongs to the CpcE/RpcE/PecE family.

Functionally, an enzyme involved in the biosynthesis of bilin. This chain is Bilin biosynthesis protein PecF (pecF), found in Nostoc sp. (strain PCC 7120 / SAG 25.82 / UTEX 2576).